We begin with the raw amino-acid sequence, 338 residues long: Ketol-acid reductoisomerase (NADP(+)) (338 aa).

Residues 1-181 enclose the KARI N-terminal Rossmann domain; that stretch reads MNVFYDKDAD…GGGRAGIIET (181 aa). Residues 24–27, Arg47, and Ser52 each bind NADP(+); that span reads YGSQ. His107 is a catalytic residue. Gly133 lines the NADP(+) pocket. Residues 182-327 enclose the KARI C-terminal knotted domain; that stretch reads NFREETETDL…AKLRAMMPWI (146 aa). Residues Asp190, Glu194, Glu226, and Glu230 each coordinate Mg(2+). Ser251 is a binding site for substrate.

Belongs to the ketol-acid reductoisomerase family. It depends on Mg(2+) as a cofactor.

It carries out the reaction (2R)-2,3-dihydroxy-3-methylbutanoate + NADP(+) = (2S)-2-acetolactate + NADPH + H(+). The catalysed reaction is (2R,3R)-2,3-dihydroxy-3-methylpentanoate + NADP(+) = (S)-2-ethyl-2-hydroxy-3-oxobutanoate + NADPH + H(+). Its pathway is amino-acid biosynthesis; L-isoleucine biosynthesis; L-isoleucine from 2-oxobutanoate: step 2/4. It functions in the pathway amino-acid biosynthesis; L-valine biosynthesis; L-valine from pyruvate: step 2/4. Involved in the biosynthesis of branched-chain amino acids (BCAA). Catalyzes an alkyl-migration followed by a ketol-acid reduction of (S)-2-acetolactate (S2AL) to yield (R)-2,3-dihydroxy-isovalerate. In the isomerase reaction, S2AL is rearranged via a Mg-dependent methyl migration to produce 3-hydroxy-3-methyl-2-ketobutyrate (HMKB). In the reductase reaction, this 2-ketoacid undergoes a metal-dependent reduction by NADPH to yield (R)-2,3-dihydroxy-isovalerate. The polypeptide is Ketol-acid reductoisomerase (NADP(+)) (Burkholderia cenocepacia (strain ATCC BAA-245 / DSM 16553 / LMG 16656 / NCTC 13227 / J2315 / CF5610) (Burkholderia cepacia (strain J2315))).